The sequence spans 692 residues: MMRPVVVKEKQIHVVEDEVRQAKTMDRDIVKHAMKQSVAKLNPKVMIKNPIMFVVEIGFVITFILSFLPSHSSSIPGWFNITVSLILLFTVLFANFAEALAEGRGKAQADSLKQSKKDVFANVVKENGEIVQVSATDLRKDDVVIVKQGEMIPSDGEVIKGLASVDESAITGESAPVIKEAGGDFCSVTGGTMVVSDEITIVITSNPGESFIDKMISLVEGAARQKTPNEIALNTVLTSLTLIFLIVVVTLPIFTNYLGFQIDTAVLVALLVCLIPTTIGGLLSAIGIAGMDRVTKFNVLAMSGKAVEAAGDINTIILDKTGTITFGNRMAHTLLPVGNETIEQVGKWAAISSVLDETPEGRSVIEYVQAKSISYNRELAEQGEFIPFKAETRMSGVDLQDGTKVRKGAVGSVIEWVRSQGGTIPKDVNQKADFISKEGGTPLVVAVDNRIYGLIYLKDTVKPGMRERFEQLRQMGIKTVMCTGDNPLTAATIAKEAGVDEFVAECKPEDKIAVIKAEQDKGKLVAMTGDGTNDAPALAQADVGLAMNSGTTAAKEAANMIDLDSNPTKIIEVVGIGKQLLMTRGALTTFSIANDIAKYFAIIPAMFTLAIPQMEALNIMKLTSPLSAILSALLFNAVIIPLLIPLAMKGIAYKPMSSNALLGRNLLIYGLGGVIVPFIGIKIIDMIVGLFI.

Helical transmembrane passes span 50-70 (PIMF…FLPS), 74-94 (SIPG…VLFA), 240-260 (LTLI…YLGF), and 266-286 (VLVA…LSAI). The active-site 4-aspartylphosphate intermediate is the aspartate 319. ATP is bound by residues aspartate 356, glutamate 360, 388–395 (FKAETRMS), and lysine 407. The Mg(2+) site is built by aspartate 530 and aspartate 534. Helical transmembrane passes span 600-620 (FAII…LNIM), 628-648 (AILS…PLAM), and 672-692 (GGVI…GLFI).

It belongs to the cation transport ATPase (P-type) (TC 3.A.3) family. Type IA subfamily. The system is composed of three essential subunits: KdpA, KdpB and KdpC.

It localises to the cell membrane. It catalyses the reaction K(+)(out) + ATP + H2O = K(+)(in) + ADP + phosphate + H(+). In terms of biological role, part of the high-affinity ATP-driven potassium transport (or Kdp) system, which catalyzes the hydrolysis of ATP coupled with the electrogenic transport of potassium into the cytoplasm. This subunit is responsible for energy coupling to the transport system and for the release of the potassium ions to the cytoplasm. In Bacillus thuringiensis (strain Al Hakam), this protein is Potassium-transporting ATPase ATP-binding subunit.